The chain runs to 1150 residues: Pesticidal crystal protein Cry9Ea (1150 aa).

The protein belongs to the delta endotoxin family.

In terms of biological role, promotes colloidosmotic lysis by binding to the midgut epithelial cells of insects. This is Pesticidal crystal protein Cry9Ea (cry9Ea) from Bacillus thuringiensis subsp. aizawai.